The primary structure comprises 456 residues: Acid sphingomyelinase-like phosphodiesterase 3b (456 aa).

The first 18 residues, 1–18 (MTLLGWLIFLAPWGVAGA), serve as a signal peptide directing secretion. Residues D28 and H30 each contribute to the Zn(2+) site. N34 is a glycosylation site (N-linked (GlcNAc...) asparagine). Cysteines 45 and 64 form a disulfide. An N-linked (GlcNAc...) asparagine glycan is attached at N72. Zn(2+) is bound at residue D93. N-linked (GlcNAc...) asparagine glycosylation is present at N100. N134 contributes to the Zn(2+) binding site. N-linked (GlcNAc...) asparagine glycans are attached at residues N164 and N223. Residues H236, H277, and H279 each contribute to the Zn(2+) site. 2 disulfides stabilise this stretch: C405/C409 and C415/C428.

The protein belongs to the acid sphingomyelinase family. Interacts with TLR4, TLR7, TLR8 and TLR9. Zn(2+) is required as a cofactor. Post-translationally, N-glycosylated. As to expression, macrophages and dendritic cells.

It is found in the secreted. The protein resides in the cell membrane. In terms of biological role, lipid-modulating phosphodiesterase. Active on the surface of macrophages and dendritic cells and strongly influences macrophage lipid composition and membrane fluidity. Acts as a negative regulator of Toll-like receptor signaling. Has in vitro phosphodiesterase activity, but the physiological substrate is unknown. Lacks activity with phosphocholine-containing lipids, but can cleave CDP-choline, and can release phosphate from ATP and ADP (in vitro). The sequence is that of Acid sphingomyelinase-like phosphodiesterase 3b (Smpdl3b) from Mus musculus (Mouse).